Consider the following 252-residue polypeptide: Probable anguibactin biosynthesis thioesterase AngT (252 aa).

Residues Ser-92 and His-229 contribute to the active site.

The protein belongs to the thioesterase family.

It participates in siderophore biosynthesis; anguibactin biosynthesis. Its function is as follows. Probable thioesterase. Involved in anguibactin production, but is not essential for virulence or iron transport gene expression. In Vibrio anguillarum (strain ATCC 68554 / 775) (Listonella anguillarum), this protein is Probable anguibactin biosynthesis thioesterase AngT (angT).